Here is a 391-residue protein sequence, read N- to C-terminus: 1-deoxy-D-xylulose 5-phosphate reductoisomerase (391 aa).

6 residues coordinate NADPH: threonine 17, glycine 18, serine 19, isoleucine 20, asparagine 47, and asparagine 130. Lysine 131 contributes to the 1-deoxy-D-xylulose 5-phosphate binding site. Glutamate 132 contributes to the NADPH binding site. Residue aspartate 156 coordinates Mn(2+). Residues serine 157, glutamate 158, serine 182, and histidine 205 each contribute to the 1-deoxy-D-xylulose 5-phosphate site. A Mn(2+)-binding site is contributed by glutamate 158. Residue glycine 211 participates in NADPH binding. The 1-deoxy-D-xylulose 5-phosphate site is built by serine 218, asparagine 223, lysine 224, and glutamate 227. Glutamate 227 serves as a coordination point for Mn(2+).

This sequence belongs to the DXR family. The cofactor is Mg(2+). Requires Mn(2+) as cofactor.

It catalyses the reaction 2-C-methyl-D-erythritol 4-phosphate + NADP(+) = 1-deoxy-D-xylulose 5-phosphate + NADPH + H(+). It participates in isoprenoid biosynthesis; isopentenyl diphosphate biosynthesis via DXP pathway; isopentenyl diphosphate from 1-deoxy-D-xylulose 5-phosphate: step 1/6. Functionally, catalyzes the NADPH-dependent rearrangement and reduction of 1-deoxy-D-xylulose-5-phosphate (DXP) to 2-C-methyl-D-erythritol 4-phosphate (MEP). The polypeptide is 1-deoxy-D-xylulose 5-phosphate reductoisomerase (Rhizobium meliloti (strain 1021) (Ensifer meliloti)).